A 25-amino-acid polypeptide reads, in one-letter code: FKVDEEFQGPIVSQNRRYFLFRPRN.

Asparagine amide is present on Asn-25.

The protein belongs to the NmU family.

It is found in the secreted. Stimulates uterine smooth muscle contraction and causes selective vasoconstriction. This chain is Neuromedin-U-25 (NMU), found in Sus scrofa (Pig).